The following is a 154-amino-acid chain: MKTGDTVADFELPDQTGTPRRLSVLLSDGPVVLFFYPAAMTPGCTKEACHFRDLAKEFAEVRASRVGISTDPVRKQAKFAEVRRFDYPLLSDAQGTVAAQFGVKRGLLGKLMPVKRTTFVIDTDRKVLDVISSEFSMDAHADKALATLRAIRSG.

The 153-residue stretch at 1–153 (MKTGDTVADF…ALATLRAIRS (153 aa)) folds into the Thioredoxin domain. The active-site Cysteine sulfenic acid (-SOH) intermediate is Cys-44. Cys-44 and Cys-49 are oxidised to a cystine.

Belongs to the peroxiredoxin family. BCP/PrxQ subfamily. In terms of assembly, monomer.

The catalysed reaction is a hydroperoxide + [thioredoxin]-dithiol = an alcohol + [thioredoxin]-disulfide + H2O. In terms of biological role, thiol-specific peroxidase that catalyzes the reduction of hydrogen peroxide and organic hydroperoxides to water and alcohols, respectively. Plays a role in cell protection against oxidative stress by detoxifying peroxides and as sensor of hydrogen peroxide-mediated signaling events. In Mycobacterium tuberculosis (strain CDC 1551 / Oshkosh), this protein is Putative peroxiredoxin MT1643 (bcpB).